The primary structure comprises 354 residues: Clavesin-1 (354 aa).

A CRAL-TRIO domain is found at 118-279; the sequence is IKRALIDGFP…EFGGTLPPYD (162 aa). A disordered region spans residues 317-354; sequence RECSPKPMKRSQSVVEAGTLKHEEKGENENTQPLLALD. Positions 335–344 are enriched in basic and acidic residues; it reads TLKHEEKGEN. Polar residues predominate over residues 345 to 354; the sequence is ENTQPLLALD.

In terms of assembly, forms a complex with clathrin heavy chain and gamma-adaptin.

The protein resides in the golgi apparatus. It is found in the trans-Golgi network membrane. It localises to the early endosome membrane. The protein localises to the cytoplasmic vesicle. Its subcellular location is the clathrin-coated vesicle. Its function is as follows. Required for normal morphology of late endosomes and/or lysosomes in neurons. Binds phosphatidylinositol 3,5-bisphosphate (PtdIns(3,5)P2). This is Clavesin-1 (Clvs1) from Mus musculus (Mouse).